The chain runs to 197 residues: Adrenodoxin-like protein 1, mitochondrial (197 aa).

The transit peptide at 1-35 (MIGHRISRLGSTIVKQLAREGYLATYGTKNLHRSY) directs the protein to the mitochondrion. Residues 79-184 (EKITIIFVDK…GVRLAIPSAT (106 aa)) form the 2Fe-2S ferredoxin-type domain. Positions 118, 124, 127, and 165 each coordinate [2Fe-2S] cluster.

This sequence belongs to the adrenodoxin/putidaredoxin family. [2Fe-2S] cluster serves as cofactor.

It is found in the mitochondrion matrix. In terms of biological role, associates in vitro with the adrenodoxin reductase MFDR to form an efficient low potential electron transfer chain that is able to reduce cytochrome C. Functions as accessory mitochondrial protein involved with BIO2 in the plant biotin synthase reaction. The polypeptide is Adrenodoxin-like protein 1, mitochondrial (Arabidopsis thaliana (Mouse-ear cress)).